The primary structure comprises 88 residues: UPF0297 protein GK2555 (88 aa).

It belongs to the UPF0297 family.

This is UPF0297 protein GK2555 from Geobacillus kaustophilus (strain HTA426).